The chain runs to 253 residues: Probable U2 small nuclear ribonucleoprotein A' (253 aa).

4 LRR repeats span residues 20–41 (NMRE…GVTR), 43–64 (QFDV…PTFS), 65–86 (RLNT…IATK), and 89–110 (NLKT…EPLA). The LRRCT domain maps to 123 to 161 (NPITHKDNYRMYMIYKLPTVRVIDFNRVRLTEREAAKKM). Disordered stretches follow at residues 163–205 (KGKS…EDRE) and 232–253 (VPEK…AMES). Positions 169–182 (KARDAIQKSVHTED) are enriched in basic and acidic residues.

The protein belongs to the U2 small nuclear ribonucleoprotein A family. In terms of assembly, interacts with rnp-3.

It localises to the nucleus. This protein is associated with sn-RNP U2. It helps the A' protein to bind stem loop IV of U2 snRNA. Required maternally for early embryonic development and zygotically for germline and somatic development. Has a role in the switch from mitosis to meiosis. Might function in alternative splicing. This Caenorhabditis elegans protein is Probable U2 small nuclear ribonucleoprotein A' (mog-2).